The primary structure comprises 67 residues: Minor structural pilin EpdD (67 aa).

Residues 1-13 constitute a propeptide that is removed on maturation; sequence MSVALKKFFSKRG. The QXSXEXXXL signature appears at 14 to 22; sequence QLSLEFSVL.

The N-terminus is cleaved by the prepilin peptidase EppA, which recognizes the class III signal sequence. In terms of processing, N-glycosylated. Glycosylation is AglB-dependent. The N-glycosylation does not occur unless the signal peptide has been cleaved first.

The protein resides in the secreted. The protein localises to the cell surface. Its subcellular location is the fimbrium. Its function is as follows. Minor component of the type IV-like pili. Essential for pili formation. This chain is Minor structural pilin EpdD, found in Methanococcus maripaludis (strain DSM 14266 / JCM 13030 / NBRC 101832 / S2 / LL).